The following is a 210-amino-acid chain: Calcium-activated potassium channel subunit beta-4 (210 aa).

Residues 1–19 (MAKLRVAYEYTEAEDKSIR) are Cytoplasmic-facing. Residues 20-40 (LGLFLIISGVVSLFIFGFCWL) traverse the membrane as a helical segment. Residues 41–167 (SPALQDLQAT…DVLLHRTHDE (127 aa)) lie on the Extracellular side of the membrane. Residues Asn-53 and Asn-90 are each glycosylated (N-linked (GlcNAc...) asparagine). The helical transmembrane segment at 168-188 (IVLLHCFLWPLVTFVVGVLIV) threads the bilayer. Residues 189–210 (VLTICAKSLAVKAEAMKKRKFS) are Cytoplasmic-facing.

Belongs to the KCNMB (TC 8.A.14.1) family. KCNMB4 subfamily. As to quaternary structure, interacts with KCNMA1 tetramer. There are probably 4 molecules of KCMNB4 per KCNMA1 tetramer. Interacts with FMR1 (via N-terminus). Post-translationally, phosphorylated. Phosphorylation modulates its effect on KCNMA1 activation kinetics. N-glycosylated. A highly glycosylated form is promoted by KCNMA1. Glycosylation, which is not required for the interaction with KCNMA1 and subcellular location, increases protection against charybdotoxin. As to expression, predominantly expressed in brain. In brain, it is expressed in the cerebellum, cerebral cortex, medulla, spinal cord, occipital pole, frontal lobe, temporal lobe, putamen, amygdala, caudate nucleus, corpus callosum, hippocampus, substantia nigra and thalamus. Weakly or not expressed in other tissues.

It is found in the membrane. Its function is as follows. Regulatory subunit of the calcium activated potassium KCNMA1 (maxiK) channel. Modulates the calcium sensitivity and gating kinetics of KCNMA1, thereby contributing to KCNMA1 channel diversity. Decreases the gating kinetics and calcium sensitivity of the KCNMA1 channel, but with fast deactivation kinetics. May decrease KCNMA1 channel openings at low calcium concentrations but increases channel openings at high calcium concentrations. Makes KCNMA1 channel resistant to 100 nM charybdotoxin (CTX) toxin concentrations. The chain is Calcium-activated potassium channel subunit beta-4 (KCNMB4) from Homo sapiens (Human).